The sequence spans 702 residues: Ribosomal RNA large subunit methyltransferase K/L (702 aa).

The THUMP domain maps to leucine 43–leucine 154.

The protein belongs to the methyltransferase superfamily. RlmKL family.

It localises to the cytoplasm. The enzyme catalyses guanosine(2445) in 23S rRNA + S-adenosyl-L-methionine = N(2)-methylguanosine(2445) in 23S rRNA + S-adenosyl-L-homocysteine + H(+). It carries out the reaction guanosine(2069) in 23S rRNA + S-adenosyl-L-methionine = N(2)-methylguanosine(2069) in 23S rRNA + S-adenosyl-L-homocysteine + H(+). Its function is as follows. Specifically methylates the guanine in position 2445 (m2G2445) and the guanine in position 2069 (m7G2069) of 23S rRNA. The polypeptide is Ribosomal RNA large subunit methyltransferase K/L (Escherichia coli O139:H28 (strain E24377A / ETEC)).